The primary structure comprises 2767 residues: Serine/threonine-protein kinase ATM (2767 aa).

Positions 1713–2317 (NVVMASNHCQ…FYQLYPLVFA (605 aa)) constitute an FAT domain. A PI3K/PI4K catalytic domain is found at 2419–2734 (WTNETTQCGG…KLDGREAGTM (316 aa)). The tract at residues 2425–2431 (QCGGLNA) is G-loop. Residues 2601–2609 (GLGDRHTQN) are catalytic loop. The interval 2621–2645 (HIDFGIAFEQGKIQTTPETVPFRLT) is activation loop. The FATC domain maps to 2735 to 2767 (GDSNVEAQVERLINEATLPSNLCMLFPGWDPHL).

It belongs to the PI3/PI4-kinase family. ATM subfamily.

It is found in the nucleus. It localises to the chromosome. The protein resides in the telomere. It carries out the reaction L-seryl-[protein] + ATP = O-phospho-L-seryl-[protein] + ADP + H(+). The enzyme catalyses L-threonyl-[protein] + ATP = O-phospho-L-threonyl-[protein] + ADP + H(+). Functionally, serine/threonine-protein kinase which recognizes the substrate consensus sequence [ST]-Q. Required to suppress spontaneous apoptosis of proliferating cells during development, and for their proper differentiation. Required for female fertility. Protects telomeres from fusion, maybe by recruiting or maintaining chromatin-modifying complexes such as Su(var)205/HP1. May activate checkpoint signaling in response to DNA double-stranded breaks induced by low-dose ionizing radiation. May phosphorylate histone H2AV. The sequence is that of Serine/threonine-protein kinase ATM (tefu) from Drosophila melanogaster (Fruit fly).